The following is a 391-amino-acid chain: Phosphoglycerate kinase (391 aa).

Residues 21-23 (DFN), arginine 41, 64-67 (HLGR), arginine 121, and arginine 154 each bind substrate. ATP contacts are provided by residues lysine 205, glutamate 322, and 348 to 351 (GGDS).

Belongs to the phosphoglycerate kinase family. Monomer.

The protein localises to the cytoplasm. The enzyme catalyses (2R)-3-phosphoglycerate + ATP = (2R)-3-phospho-glyceroyl phosphate + ADP. It participates in carbohydrate degradation; glycolysis; pyruvate from D-glyceraldehyde 3-phosphate: step 2/5. The chain is Phosphoglycerate kinase from Solibacter usitatus (strain Ellin6076).